A 140-amino-acid chain; its full sequence is Organic hydroperoxide resistance protein-like (140 aa).

The protein belongs to the OsmC/Ohr family.

This chain is Organic hydroperoxide resistance protein-like, found in Staphylococcus aureus (strain bovine RF122 / ET3-1).